Consider the following 178-residue polypeptide: Large ribosomal subunit protein bL17 (178 aa).

Composition is skewed to low complexity over residues 123-139 (KAPA…NTAT) and 151-160 (EDAAAQAPVA). The disordered stretch occupies residues 123–178 (KAPASAADAKAQINTATEAKEAEPEAPAEDAAAQAPVADEQKAAEVDEKAEEKPEA). The span at 161–178 (DEQKAAEVDEKAEEKPEA) shows a compositional bias: basic and acidic residues.

The protein belongs to the bacterial ribosomal protein bL17 family. Part of the 50S ribosomal subunit. Contacts protein L32.

This Cutibacterium acnes (strain DSM 16379 / KPA171202) (Propionibacterium acnes) protein is Large ribosomal subunit protein bL17.